A 263-amino-acid chain; its full sequence is Energy-coupling factor transporter transmembrane protein EcfT (263 aa).

4 consecutive transmembrane segments (helical) span residues 22 to 42 (IIFAFCFIPLVFLANNAATNI), 69 to 89 (ILFLIIFTFIIQLLFTREGAV), 105 to 125 (LAIIVSLRFFYLVSITTLVTL), and 243 to 263 (TGLILLLVALGLLLVYLRGGF).

This sequence belongs to the energy-coupling factor EcfT family. Forms a stable energy-coupling factor (ECF) transporter complex composed of 2 membrane-embedded substrate-binding proteins (S component), 2 ATP-binding proteins (A component) and 2 transmembrane proteins (T component). May be able to interact with more than 1 S component at a time.

It localises to the cell membrane. Functionally, transmembrane (T) component of an energy-coupling factor (ECF) ABC-transporter complex. Unlike classic ABC transporters this ECF transporter provides the energy necessary to transport a number of different substrates. The protein is Energy-coupling factor transporter transmembrane protein EcfT of Exiguobacterium sibiricum (strain DSM 17290 / CCUG 55495 / CIP 109462 / JCM 13490 / 255-15).